The sequence spans 108 residues: Phosphoribosyl-AMP cyclohydrolase (108 aa).

Asp-78 provides a ligand contact to Mg(2+). A Zn(2+)-binding site is contributed by Cys-79. Asp-80 and Asp-82 together coordinate Mg(2+). Positions 95 and 102 each coordinate Zn(2+).

This sequence belongs to the PRA-CH family. In terms of assembly, homodimer. Mg(2+) is required as a cofactor. Zn(2+) serves as cofactor.

The protein localises to the cytoplasm. The catalysed reaction is 1-(5-phospho-beta-D-ribosyl)-5'-AMP + H2O = 1-(5-phospho-beta-D-ribosyl)-5-[(5-phospho-beta-D-ribosylamino)methylideneamino]imidazole-4-carboxamide. The protein operates within amino-acid biosynthesis; L-histidine biosynthesis; L-histidine from 5-phospho-alpha-D-ribose 1-diphosphate: step 3/9. Catalyzes the hydrolysis of the adenine ring of phosphoribosyl-AMP. This chain is Phosphoribosyl-AMP cyclohydrolase, found in Cenarchaeum symbiosum (strain A).